Reading from the N-terminus, the 124-residue chain is Large ribosomal subunit protein bL12 (124 aa).

The protein belongs to the bacterial ribosomal protein bL12 family. In terms of assembly, homodimer. Part of the ribosomal stalk of the 50S ribosomal subunit. Forms a multimeric L10(L12)X complex, where L10 forms an elongated spine to which 2 to 4 L12 dimers bind in a sequential fashion. Binds GTP-bound translation factors.

Forms part of the ribosomal stalk which helps the ribosome interact with GTP-bound translation factors. Is thus essential for accurate translation. This Herminiimonas arsenicoxydans protein is Large ribosomal subunit protein bL12.